The primary structure comprises 329 residues: Quinone oxidoreductase (329 aa).

At Ala2 the chain carries N-acetylalanine. The residue at position 23 (Lys23) is an N6-acetyllysine. NADP(+) is bound by residues Tyr53, 158–161, Gly181, His200, Asn229, 246–249, and 269–271; these read SGGV, VGCR, and VSL. Lys296 carries the post-translational modification N6-succinyllysine.

The protein belongs to the zinc-containing alcohol dehydrogenase family. Quinone oxidoreductase subfamily. Homotetramer.

The protein resides in the cytoplasm. It carries out the reaction 2 a quinone + NADPH + H(+) = 2 a 1,4-benzosemiquinone + NADP(+). Its function is as follows. Does not have alcohol dehydrogenase activity. Binds NADP and acts through a one-electron transfer process. Orthoquinones, such as 1,2-naphthoquinone or 9,10-phenanthrenequinone, are the best substrates (in vitro). May act in the detoxification of xenobiotics. Interacts with (AU)-rich elements (ARE) in the 3'-UTR of target mRNA species and enhances their stability. NADPH binding interferes with mRNA binding. This is Quinone oxidoreductase (Cryz) from Rattus norvegicus (Rat).